Reading from the N-terminus, the 60-residue chain is uncharacterized protein (60 aa).

Residues 38-58 traverse the membrane as a helical segment; the sequence is SILAGGIIPVLFFFPLFLFLY.

The protein resides in the membrane. This is an uncharacterized protein from Saccharomyces cerevisiae (strain ATCC 204508 / S288c) (Baker's yeast).